We begin with the raw amino-acid sequence, 199 residues long: Recombination protein RecR (199 aa).

The C4-type zinc finger occupies 56–71 (CAVCGNIAEETQCRIC). One can recognise a Toprim domain in the interval 79–174 (TVICVVEEPK…KVTRLASGLP (96 aa)).

The protein belongs to the RecR family.

In terms of biological role, may play a role in DNA repair. It seems to be involved in an RecBC-independent recombinational process of DNA repair. It may act with RecF and RecO. The chain is Recombination protein RecR from Thermobifida fusca (strain YX).